The sequence spans 661 residues: Transketolase (661 aa).

His-30 provides a ligand contact to substrate. Thiamine diphosphate-binding positions include His-70 and 118–120 (GPL). The segment at 99–118 (STTPGHPEFRDTPGVEATTG) is disordered. Residue Asp-159 participates in Mg(2+) binding. Residues Gly-160 and Asn-189 each coordinate thiamine diphosphate. The Mg(2+) site is built by Asn-189 and Val-191. 3 residues coordinate substrate: His-266, Arg-357, and Ser-384. His-266 provides a ligand contact to thiamine diphosphate. Glu-411 serves as the catalytic Proton donor. Residue Phe-437 participates in thiamine diphosphate binding. Substrate-binding residues include His-461, Asp-469, and Arg-520.

Belongs to the transketolase family. As to quaternary structure, homodimer. Mg(2+) serves as cofactor. Ca(2+) is required as a cofactor. It depends on Mn(2+) as a cofactor. The cofactor is Co(2+). Requires thiamine diphosphate as cofactor.

It catalyses the reaction D-sedoheptulose 7-phosphate + D-glyceraldehyde 3-phosphate = aldehydo-D-ribose 5-phosphate + D-xylulose 5-phosphate. Catalyzes the transfer of a two-carbon ketol group from a ketose donor to an aldose acceptor, via a covalent intermediate with the cofactor thiamine pyrophosphate. The chain is Transketolase (tkt) from Physarum polycephalum (Slime mold).